Reading from the N-terminus, the 185-residue chain is Pyruvate/ketoisovalerate oxidoreductases common subunit gamma (185 aa).

Heterotetramer of one alpha, one beta, one delta and one gamma chain.

The catalysed reaction is 2 oxidized [2Fe-2S]-[ferredoxin] + pyruvate + CoA = 2 reduced [2Fe-2S]-[ferredoxin] + acetyl-CoA + CO2 + H(+). It carries out the reaction 3-methyl-2-oxobutanoate + 2 oxidized [2Fe-2S]-[ferredoxin] + CoA = 2-methylpropanoyl-CoA + 2 reduced [2Fe-2S]-[ferredoxin] + CO2 + H(+). The protein is Pyruvate/ketoisovalerate oxidoreductases common subunit gamma (porG) of Pyrococcus abyssi (strain GE5 / Orsay).